The sequence spans 173 residues: Cell division protein SepF (173 aa).

The interval 31-82 is disordered; sequence FEDFDEPLDERPSRNRSPRDDSRNNAVTDSSDHSPSRNERRSPAPAPATADL. 2 stretches are compositionally biased toward basic and acidic residues: residues 39–53 and 60–72; these read DERP…DDSR and SSDH…ERRS.

Belongs to the SepF family. In terms of assembly, homodimer. Interacts with FtsZ.

It localises to the cytoplasm. Its function is as follows. Cell division protein that is part of the divisome complex and is recruited early to the Z-ring. Probably stimulates Z-ring formation, perhaps through the cross-linking of FtsZ protofilaments. Its function overlaps with FtsA. The sequence is that of Cell division protein SepF from Thermobifida fusca (strain YX).